We begin with the raw amino-acid sequence, 274 residues long: Penicillin-insensitive murein endopeptidase (274 aa).

The first 19 residues, 1-19 (MNKTAIALLALLASSASLA), serve as a signal peptide directing secretion. 3 disulfides stabilise this stretch: Cys44–Cys265, Cys187–Cys235, and Cys216–Cys223. Residues His110, His113, Asp120, Asp147, His150, and His211 each contribute to the Zn(2+) site. A disordered region spans residues 228 to 274 (LPPSGDGCGAELQSWFEPPKPGTTKPEKKTPPPLPPSCQALLDEHVI).

The protein belongs to the peptidase M74 family. In terms of assembly, dimer. Requires Zn(2+) as cofactor.

The protein localises to the periplasm. Inhibited by Zn(2+) at 10 mM and by metal chelating agents EDTA and 1,10-phenanthroline. Murein endopeptidase that cleaves the D-alanyl-meso-2,6-diamino-pimelyl amide bond that connects peptidoglycan strands. Likely plays a role in the removal of murein from the sacculus and could also play a role in the integration of nascent murein strands into the sacculus. In Escherichia coli (strain K12), this protein is Penicillin-insensitive murein endopeptidase (mepA).